The chain runs to 174 residues: Guided entry of tail-anchored proteins factor 1 (174 aa).

The Lumenal segment spans residues 1-8 (MSSAAADH). A helical membrane pass occupies residues 9–29 (WAWLLVLSFVFGCNVLRILLP). At 30–99 (SFSSFMSRVL…VKARTAQLAK (70 aa)) the chain is on the cytoplasmic side. Positions 39–94 (LQKDAEQESQMRAEIQDMKQELSTVNMMDEFARYARLERKINKMTDKLKTHVKART) form a coiled coil. Positions 39-97 (LQKDAEQESQMRAEIQDMKQELSTVNMMDEFARYARLERKINKMTDKLKTHVKARTAQL) are interaction with GET3/TRC40. Residues 100–120 (IKWVISVAFYVLQAALMISLI) form a helical membrane-spanning segment. The Lumenal portion of the chain corresponds to 121 to 148 (WKYYSVPVAVVPSKWITPLDRLVAFPTR). Residues 149–169 (VAGGVGITCWILVCNKVVAIV) traverse the membrane as a helical segment. The Cytoplasmic portion of the chain corresponds to 170 to 174 (LHPFS).

Belongs to the WRB/GET1 family. As to quaternary structure, component of the Golgi to ER traffic (GET) complex, which is composed of GET1/WRB, CAMLG/GET2 and GET3/TRC40. Within the complex, GET1 and CAMLG form a heterotetramer which is stabilized by phosphatidylinositol binding and which binds to the GET3 homodimer. Interacts with CAMLG (via C-terminus). GET3 shows a higher affinity for CAMLG than for GET1.

It localises to the endoplasmic reticulum membrane. Its function is as follows. Required for the post-translational delivery of tail-anchored (TA) proteins to the endoplasmic reticulum (ER). Together with CAMLG/GET2, acts as a membrane receptor for soluble GET3/TRC40, which recognizes and selectively binds the transmembrane domain of TA proteins in the cytosol. Required to ensure correct topology and ER insertion of CAMLG. This chain is Guided entry of tail-anchored proteins factor 1, found in Homo sapiens (Human).